A 132-amino-acid chain; its full sequence is Small ribosomal subunit protein uS8c (132 aa).

It belongs to the universal ribosomal protein uS8 family. In terms of assembly, part of the 30S ribosomal subunit.

It is found in the plastid. Its subcellular location is the chloroplast. One of the primary rRNA binding proteins, it binds directly to 16S rRNA central domain where it helps coordinate assembly of the platform of the 30S subunit. In Cycas taitungensis (Prince sago), this protein is Small ribosomal subunit protein uS8c (rps8).